The following is a 362-amino-acid chain: Histidinol-phosphate aminotransferase (362 aa).

Lys-210 bears the N6-(pyridoxal phosphate)lysine mark.

This sequence belongs to the class-II pyridoxal-phosphate-dependent aminotransferase family. Histidinol-phosphate aminotransferase subfamily. Homodimer. Pyridoxal 5'-phosphate serves as cofactor.

The enzyme catalyses L-histidinol phosphate + 2-oxoglutarate = 3-(imidazol-4-yl)-2-oxopropyl phosphate + L-glutamate. It participates in amino-acid biosynthesis; L-histidine biosynthesis; L-histidine from 5-phospho-alpha-D-ribose 1-diphosphate: step 7/9. This Rhodopirellula baltica (strain DSM 10527 / NCIMB 13988 / SH1) protein is Histidinol-phosphate aminotransferase.